Here is a 485-residue protein sequence, read N- to C-terminus: E3 ubiquitin-protein ligase TRIM68 (485 aa).

The RING-type zinc-finger motif lies at 16–61 (CPICMTFLREPMSIDCGHSFCHSCLSGLWEIPGESQNWGYTCPLCR). Residues 93-134 (LKGDLCERHGEKLKMFCKEDVLIMCEACSQSPEHEAHSVVPM) form a B box-type zinc finger. Zn(2+)-binding residues include Cys-98, His-101, Cys-120, and His-126. Residues 207–239 (AEVAAALASLQREAAETMQKLELNHSELIQQSQ) adopt a coiled-coil conformation. Residues 285 to 481 (LKTDCRVLGL…NTAPLAICSL (197 aa)) enclose the B30.2/SPRY domain.

This sequence belongs to the TRIM/RBCC family. Interacts with AR/androgen receptor (via ligand-binding domain). Interacts with KAT5/TIP60. In terms of processing, auto-ubiquitinated. As to expression, widely expressed. Expressed at high levels in prostate cancer cell lines. Up-regulation could be restricted to androgen-dependent cells.

The protein resides in the cytoplasm. Its subcellular location is the perinuclear region. The protein localises to the nucleus. The catalysed reaction is S-ubiquitinyl-[E2 ubiquitin-conjugating enzyme]-L-cysteine + [acceptor protein]-L-lysine = [E2 ubiquitin-conjugating enzyme]-L-cysteine + N(6)-ubiquitinyl-[acceptor protein]-L-lysine.. The protein operates within protein modification; protein ubiquitination. Functionally, functions as a ubiquitin E3 ligase. Acts as a coactivator of androgen receptor (AR) depending on its ubiquitin ligase activity. The sequence is that of E3 ubiquitin-protein ligase TRIM68 (TRIM68) from Homo sapiens (Human).